We begin with the raw amino-acid sequence, 314 residues long: Homoserine O-succinyltransferase (314 aa).

C142 (acyl-thioester intermediate) is an active-site residue. Substrate contacts are provided by K163 and S192. The Proton acceptor role is filled by H235. The active site involves E237. Residue R249 coordinates substrate.

It belongs to the MetA family.

It is found in the cytoplasm. It catalyses the reaction L-homoserine + succinyl-CoA = O-succinyl-L-homoserine + CoA. It participates in amino-acid biosynthesis; L-methionine biosynthesis via de novo pathway; O-succinyl-L-homoserine from L-homoserine: step 1/1. Its function is as follows. Transfers a succinyl group from succinyl-CoA to L-homoserine, forming succinyl-L-homoserine. In Shewanella pealeana (strain ATCC 700345 / ANG-SQ1), this protein is Homoserine O-succinyltransferase.